Here is a 94-residue protein sequence, read N- to C-terminus: DNA-binding protein HU (94 aa).

The disordered stretch occupies residues 56–94 (QKGKEGKVPGSDKTYKTEDKRVPKFKPGKTLKQKVEEGK). The span at 68–77 (KTYKTEDKRV) shows a compositional bias: basic and acidic residues. Over residues 78–87 (PKFKPGKTLK) the composition is skewed to basic residues.

The protein belongs to the bacterial histone-like protein family. In terms of assembly, homodimer.

Its function is as follows. Histone-like DNA-binding protein which is capable of wrapping DNA to stabilize it, and thus to prevent its denaturation under extreme environmental conditions. The sequence is that of DNA-binding protein HU (hup) from Helicobacter pylori (strain ATCC 700392 / 26695) (Campylobacter pylori).